The primary structure comprises 713 residues: Phosphoribosylformylglycinamidine synthase subunit PurL (713 aa).

The active site involves H32. Y35 lines the ATP pocket. Residue E76 participates in Mg(2+) binding. Residues 77-80 and R99 each bind substrate; that span reads SHNH. The active-site Proton acceptor is the H78. Position 100 (D100) interacts with Mg(2+). Q224 provides a ligand contact to substrate. D252 is a Mg(2+) binding site. 296-298 lines the substrate pocket; sequence ESQ. Residues D471 and G508 each coordinate ATP. Mg(2+) is bound at residue N509. Residue S511 participates in substrate binding.

Belongs to the FGAMS family. As to quaternary structure, monomer. Part of the FGAM synthase complex composed of 1 PurL, 1 PurQ and 2 PurS subunits.

It localises to the cytoplasm. It carries out the reaction N(2)-formyl-N(1)-(5-phospho-beta-D-ribosyl)glycinamide + L-glutamine + ATP + H2O = 2-formamido-N(1)-(5-O-phospho-beta-D-ribosyl)acetamidine + L-glutamate + ADP + phosphate + H(+). It participates in purine metabolism; IMP biosynthesis via de novo pathway; 5-amino-1-(5-phospho-D-ribosyl)imidazole from N(2)-formyl-N(1)-(5-phospho-D-ribosyl)glycinamide: step 1/2. Part of the phosphoribosylformylglycinamidine synthase complex involved in the purines biosynthetic pathway. Catalyzes the ATP-dependent conversion of formylglycinamide ribonucleotide (FGAR) and glutamine to yield formylglycinamidine ribonucleotide (FGAM) and glutamate. The FGAM synthase complex is composed of three subunits. PurQ produces an ammonia molecule by converting glutamine to glutamate. PurL transfers the ammonia molecule to FGAR to form FGAM in an ATP-dependent manner. PurS interacts with PurQ and PurL and is thought to assist in the transfer of the ammonia molecule from PurQ to PurL. The polypeptide is Phosphoribosylformylglycinamidine synthase subunit PurL (Thermococcus kodakarensis (strain ATCC BAA-918 / JCM 12380 / KOD1) (Pyrococcus kodakaraensis (strain KOD1))).